A 704-amino-acid polypeptide reads, in one-letter code: Elongation factor G (704 aa).

Residues 8–290 form the tr-type G domain; sequence ARYRNIGISA…AVIDYLPSPV (283 aa). GTP-binding positions include 17 to 24, 88 to 92, and 142 to 145; these read AHIDAGKT, DTPGH, and NKMD.

Belongs to the TRAFAC class translation factor GTPase superfamily. Classic translation factor GTPase family. EF-G/EF-2 subfamily.

The protein resides in the cytoplasm. Functionally, catalyzes the GTP-dependent ribosomal translocation step during translation elongation. During this step, the ribosome changes from the pre-translocational (PRE) to the post-translocational (POST) state as the newly formed A-site-bound peptidyl-tRNA and P-site-bound deacylated tRNA move to the P and E sites, respectively. Catalyzes the coordinated movement of the two tRNA molecules, the mRNA and conformational changes in the ribosome. This is Elongation factor G from Salmonella arizonae (strain ATCC BAA-731 / CDC346-86 / RSK2980).